The following is a 371-amino-acid chain: AA9 family lytic polysaccharide monooxygenase B (371 aa).

A signal peptide spans 1–25; that stretch reads MSIAKIAGVVLGSAALVAGHGYVSG. Cu(2+)-binding residues include His-20 and His-104. Disulfide bonds link Cys-74–Cys-194 and Cys-115–Cys-119. Asn-154 is a glycosylation site (N-linked (GlcNAc...) asparagine). The O2 site is built by His-180 and Gln-189. Tyr-191 is a Cu(2+) binding site. A disordered region spans residues 304–332; sequence HVQATSSSAAASTPTASSGASSGSGSSSS. The segment covering 307 to 332 has biased composition (low complexity); the sequence is ATSSSAAASTPTASSGASSGSGSSSS.

This sequence belongs to the polysaccharide monooxygenase AA9 family. Requires Cu(2+) as cofactor.

The protein localises to the secreted. It carries out the reaction [(1-&gt;4)-beta-D-glucosyl]n+m + reduced acceptor + O2 = 4-dehydro-beta-D-glucosyl-[(1-&gt;4)-beta-D-glucosyl]n-1 + [(1-&gt;4)-beta-D-glucosyl]m + acceptor + H2O.. Lytic polysaccharide monooxygenase (LPMO) that depolymerizes crystalline and amorphous polysaccharides via the oxidation of scissile alpha- or beta-(1-4)-glycosidic bonds, yielding C1 and C4 oxidation products. Catalysis by LPMOs requires the reduction of the active-site copper from Cu(II) to Cu(I) by a reducing agent and H(2)O(2) or O(2) as a cosubstrate. In addition to cellulose, also cleaves the beta-(1!4)-glucan backbone of tamarind xyloglucan, irrespective of substitutions which contrasts with AA9A xyloglucan cleavage activity. The sequence is that of AA9 family lytic polysaccharide monooxygenase B from Aspergillus tamarii.